Here is an 895-residue protein sequence, read N- to C-terminus: Eukaryotic translation initiation factor 3 subunit C (895 aa).

Residues M1–K108 form a disordered region. 2 stretches are compositionally biased toward acidic residues: residues S11 to D31 and D52 to N75. The 175-residue stretch at F638–L812 folds into the PCI domain. The segment covering D838–G860 has biased composition (basic and acidic residues). The interval D838–V895 is disordered. Over residues R884 to V895 the composition is skewed to low complexity.

Belongs to the eIF-3 subunit C family. In terms of assembly, component of the eukaryotic translation initiation factor 3 (eIF-3) complex.

It is found in the cytoplasm. In terms of biological role, component of the eukaryotic translation initiation factor 3 (eIF-3) complex, which is involved in protein synthesis of a specialized repertoire of mRNAs and, together with other initiation factors, stimulates binding of mRNA and methionyl-tRNAi to the 40S ribosome. The eIF-3 complex specifically targets and initiates translation of a subset of mRNAs involved in cell proliferation. This chain is Eukaryotic translation initiation factor 3 subunit C, found in Mycosarcoma maydis (Corn smut fungus).